We begin with the raw amino-acid sequence, 195 residues long: Imidazoleglycerol-phosphate dehydratase (195 aa).

Belongs to the imidazoleglycerol-phosphate dehydratase family.

The protein resides in the cytoplasm. The catalysed reaction is D-erythro-1-(imidazol-4-yl)glycerol 3-phosphate = 3-(imidazol-4-yl)-2-oxopropyl phosphate + H2O. The protein operates within amino-acid biosynthesis; L-histidine biosynthesis; L-histidine from 5-phospho-alpha-D-ribose 1-diphosphate: step 6/9. The chain is Imidazoleglycerol-phosphate dehydratase from Burkholderia lata (strain ATCC 17760 / DSM 23089 / LMG 22485 / NCIMB 9086 / R18194 / 383).